The chain runs to 498 residues: Probable deoxyguanosinetriphosphate triphosphohydrolase (498 aa).

Residues 71 to 262 (RLTHSLEVQQ…MEAADDISYC (192 aa)) form the HD domain.

It belongs to the dGTPase family. Type 1 subfamily. Mg(2+) serves as cofactor.

It carries out the reaction dGTP + H2O = 2'-deoxyguanosine + triphosphate + H(+). DGTPase preferentially hydrolyzes dGTP over the other canonical NTPs. The polypeptide is Probable deoxyguanosinetriphosphate triphosphohydrolase (Pseudomonas aeruginosa (strain ATCC 15692 / DSM 22644 / CIP 104116 / JCM 14847 / LMG 12228 / 1C / PRS 101 / PAO1)).